The following is a 115-amino-acid chain: Large ribosomal subunit protein bL19 (115 aa).

Belongs to the bacterial ribosomal protein bL19 family.

Functionally, this protein is located at the 30S-50S ribosomal subunit interface and may play a role in the structure and function of the aminoacyl-tRNA binding site. The polypeptide is Large ribosomal subunit protein bL19 (Streptococcus pyogenes serotype M1).